The following is a 434-amino-acid chain: Histidinol dehydrogenase (434 aa).

Positions 130, 188, and 211 each coordinate NAD(+). Residues S237, Q259, and H262 each coordinate substrate. Positions 259 and 262 each coordinate Zn(2+). Catalysis depends on proton acceptor residues E326 and H327. Substrate contacts are provided by H327, D360, E414, and H419. D360 provides a ligand contact to Zn(2+). H419 is a Zn(2+) binding site.

It belongs to the histidinol dehydrogenase family. In terms of assembly, homodimer. It depends on Zn(2+) as a cofactor.

It carries out the reaction L-histidinol + 2 NAD(+) + H2O = L-histidine + 2 NADH + 3 H(+). Its pathway is amino-acid biosynthesis; L-histidine biosynthesis; L-histidine from 5-phospho-alpha-D-ribose 1-diphosphate: step 9/9. Functionally, catalyzes the sequential NAD-dependent oxidations of L-histidinol to L-histidinaldehyde and then to L-histidine. This is Histidinol dehydrogenase from Shigella flexneri.